The primary structure comprises 316 residues: Ribosomal protein L11 methyltransferase (316 aa).

The S-adenosyl-L-methionine site is built by threonine 157, glycine 178, aspartate 200, and asparagine 243.

It belongs to the methyltransferase superfamily. PrmA family.

Its subcellular location is the cytoplasm. The catalysed reaction is L-lysyl-[protein] + 3 S-adenosyl-L-methionine = N(6),N(6),N(6)-trimethyl-L-lysyl-[protein] + 3 S-adenosyl-L-homocysteine + 3 H(+). Its function is as follows. Methylates ribosomal protein L11. The sequence is that of Ribosomal protein L11 methyltransferase from Streptococcus pneumoniae serotype 2 (strain D39 / NCTC 7466).